Consider the following 467-residue polypeptide: Matrix metalloproteinase-18 (467 aa).

The signal sequence occupies residues 1 to 17; the sequence is MNSLLLKLLLCVAITAA. The propeptide occupies 18 to 99; that stretch reads FPADKQDEPP…PRCGVYDVGQ (82 aa). The short motif at 90 to 97 is the Cysteine switch element; the sequence is PRCGVYDV. Residues C92 and H218 each contribute to the Zn(2+) site. E219 is an active-site residue. Positions 222 and 228 each coordinate Zn(2+). 4 Hemopexin repeats span residues 277–326, 327–373, 375–423, and 424–467; these read PSRC…WPSL, PTNI…GFPK, VKRI…FPGI, and PDKI…WLGC. Residues C280 and C467 are joined by a disulfide bond.

Belongs to the peptidase M10A family. The cofactor is Zn(2+). Requires Ca(2+) as cofactor. Expressed only transiently in whole animal, at time when tadpole feeding begins.

It is found in the secreted. The protein localises to the extracellular space. It localises to the extracellular matrix. Up-regulated in the tail by thyroid hormone. Its function is as follows. Cleaves collagen type I. May play a role in larval tissue degeneration and adult organogenesis during amphibian metamorphosis. May be involved in tail resorption. In Xenopus laevis (African clawed frog), this protein is Matrix metalloproteinase-18 (mmp18).